Reading from the N-terminus, the 131-residue chain is Large ribosomal subunit protein bL12 (131 aa).

This sequence belongs to the bacterial ribosomal protein bL12 family. Homodimer. Part of the ribosomal stalk of the 50S ribosomal subunit. Forms a multimeric L10(L12)X complex, where L10 forms an elongated spine to which 2 to 4 L12 dimers bind in a sequential fashion. Binds GTP-bound translation factors.

Functionally, forms part of the ribosomal stalk which helps the ribosome interact with GTP-bound translation factors. Is thus essential for accurate translation. The protein is Large ribosomal subunit protein bL12 of Prochlorococcus marinus (strain MIT 9312).